Reading from the N-terminus, the 293-residue chain is MTEDSQRNFRSVYYEKVGFRGVEEKKSLEILLKDDRLDIEKLCTFSQRFPLPSMYRALVWKVLLGILPPHHESHVQVMTYRKEQYSDVLHALKVIRFVSDATPQSEVYLYMHRLESGKLPRSPSFPLEPEDEVFLAIAKAMEEMVEDSVDCYWIMRCFVNQLNSKYRDTLPQLPKAFEQYLNLEDSRLLSHLKACCAVSTLPYELWFKKCFAGCLPESSLQRIWDKVVSGSCKILVFVAVEILLTFKIKVMALNSAEKITKFLENIPQDSSDAIVSKAIDLWHKHCGTPVHSA.

The 182-residue stretch at 50–231 (PLPSMYRALV…RIWDKVVSGS (182 aa)) folds into the Rab-GAP TBC domain.

In terms of assembly, component of the TSC-TBC complex (also named Rhebulator complex), composed of 2 molecules of TSC1, 2 molecules of TSC2 and 1 molecule of TBC1D7. Interacts with TSC1 (via C-terminal half of the coiled-coil domain).

It is found in the lysosome membrane. The protein localises to the cytoplasmic vesicle. The protein resides in the cytoplasm. Its subcellular location is the cytosol. Its function is as follows. Non-catalytic component of the TSC-TBC complex, a multiprotein complex that acts as a negative regulator of the canonical mTORC1 complex, an evolutionarily conserved central nutrient sensor that stimulates anabolic reactions and macromolecule biosynthesis to promote cellular biomass generation and growth. The TSC-TBC complex acts as a GTPase-activating protein (GAP) for the small GTPase RHEB, a direct activator of the protein kinase activity of mTORC1. In absence of nutrients, the TSC-TBC complex inhibits mTORC1, thereby preventing phosphorylation of ribosomal protein S6 kinase (RPS6KB1 and RPS6KB2) and EIF4EBP1 (4E-BP1) by the mTORC1 signaling. The TSC-TBC complex is inactivated in response to nutrients, relieving inhibition of mTORC1. The chain is TBC1 domain family member 7 (TBC1D7) from Bos taurus (Bovine).